The chain runs to 330 residues: Free fatty acid receptor 2 (330 aa).

The Extracellular portion of the chain corresponds to 1–12 (MLPDWKSSLILM). The chain crosses the membrane as a helical span at residues 13–33 (AYIIIFLTGLPANLLALRAFV). At 34–41 (GRIRQPQP) the chain is on the cytoplasmic side. A helical transmembrane segment spans residues 42 to 62 (APVHILLLSLTLADLLLLLLL). At 63 to 84 (PFKIIEAASNFRWYLPKVVCAL) the chain is on the extracellular side. The helical transmembrane segment at 85 to 105 (TSFGFYSSIYCSTWLLAGISI) threads the bilayer. Topologically, residues 106–126 (ERYLGVAFPVQYKLSRRPLYG) are cytoplasmic. A helical membrane pass occupies residues 127–147 (VIAALVAWVMSFGHCTIVIIV). At 148–173 (QYLNTTEQVRSGNEITCYENFTDNQL) the chain is on the extracellular side. Residues N151 and N167 are each glycosylated (N-linked (GlcNAc...) asparagine). Residues 174-194 (DVVLPVRLELCLVLFFIPMAV) form a helical membrane-spanning segment. At 195-219 (TIFCYWRFVWIMLSQPLVGAQRRRR) the chain is on the cytoplasmic side. A helical transmembrane segment spans residues 220 to 240 (AVGLAVVTLLNFLVCFGPYNV). The Extracellular segment spans residues 241–255 (SHLVGYHQRKSPWWR). The helical transmembrane segment at 256 to 276 (SIAVVFSSLNASLDPLLFYFS) threads the bilayer. Residues 277–330 (SSVVRRAFGRGLQVLRNQGSSLLGRRGKDTAEGTNEDRGVGQGEGMPSSDFTTE) are Cytoplasmic-facing. The disordered stretch occupies residues 299 to 330 (LGRRGKDTAEGTNEDRGVGQGEGMPSSDFTTE). The span at 302–315 (RGKDTAEGTNEDRG) shows a compositional bias: basic and acidic residues.

This sequence belongs to the G-protein coupled receptor 1 family. In terms of assembly, interacts with FCN1 (via Fibrinogen C-terminal domain). In terms of tissue distribution, expressed at relatively high levels in peripheral blood leukocytes and, to lesser extent, in spleen.

It is found in the cell membrane. Functionally, g protein-coupled receptor that is activated by a major product of dietary fiber digestion, the short chain fatty acids (SCFAs), and that plays a role in the regulation of whole-body energy homeostasis and in intestinal immunity. In omnivorous mammals, the short chain fatty acids acetate, propionate and butyrate are produced primarily by the gut microbiome that metabolizes dietary fibers. SCFAs serve as a source of energy but also act as signaling molecules. That G protein-coupled receptor is probably coupled to the pertussis toxin-sensitive, G(i/o)-alpha family of G proteins but also to the Gq family. Its activation results in the formation of inositol 1,4,5-trisphosphate, the mobilization of intracellular calcium, the phosphorylation of the MAPK3/ERK1 and MAPK1/ERK2 kinases and the inhibition of intracellular cAMP accumulation. May play a role in glucose homeostasis by regulating the secretion of GLP-1, in response to short-chain fatty acids accumulating in the intestine. May also regulate the production of LEP/Leptin, a hormone acting on the central nervous system to inhibit food intake. Finally, may also regulate whole-body energy homeostasis through adipogenesis regulating both differentiation and lipid storage of adipocytes. In parallel to its role in energy homeostasis, may also mediate the activation of the inflammatory and immune responses by SCFA in the intestine, regulating the rapid production of chemokines and cytokines. May also play a role in the resolution of the inflammatory response and control chemotaxis in neutrophils. In addition to SCFAs, may also be activated by the extracellular lectin FCN1 in a process leading to activation of monocytes and inducing the secretion of interleukin-8/IL-8 in response to the presence of microbes. Among SCFAs, the fatty acids containing less than 6 carbons, the most potent activators are probably acetate, propionate and butyrate. Exhibits a SCFA-independent constitutive G protein-coupled receptor activity. This Homo sapiens (Human) protein is Free fatty acid receptor 2 (FFAR2).